Here is a 448-residue protein sequence, read N- to C-terminus: Deoxyguanosinetriphosphate triphosphohydrolase-like protein (448 aa).

In terms of domain architecture, HD spans 67–260; sequence RLTHSLEVSQ…MELADDIAYG (194 aa).

Belongs to the dGTPase family. Type 2 subfamily.

This Aliivibrio fischeri (strain MJ11) (Vibrio fischeri) protein is Deoxyguanosinetriphosphate triphosphohydrolase-like protein.